We begin with the raw amino-acid sequence, 341 residues long: Anthranilate phosphoribosyltransferase (341 aa).

5-phospho-alpha-D-ribose 1-diphosphate-binding positions include G82, 85–86 (GD), T90, 92–95 (NIST), 110–118 (KHGNRAITS), and T122. G82 serves as a coordination point for anthranilate. Residue S94 coordinates Mg(2+). N113 is a binding site for anthranilate. Residue R168 participates in anthranilate binding. Residues D226 and E227 each contribute to the Mg(2+) site.

Belongs to the anthranilate phosphoribosyltransferase family. Homodimer. Mg(2+) is required as a cofactor.

It carries out the reaction N-(5-phospho-beta-D-ribosyl)anthranilate + diphosphate = 5-phospho-alpha-D-ribose 1-diphosphate + anthranilate. It participates in amino-acid biosynthesis; L-tryptophan biosynthesis; L-tryptophan from chorismate: step 2/5. Functionally, catalyzes the transfer of the phosphoribosyl group of 5-phosphorylribose-1-pyrophosphate (PRPP) to anthranilate to yield N-(5'-phosphoribosyl)-anthranilate (PRA). In Caulobacter vibrioides (strain ATCC 19089 / CIP 103742 / CB 15) (Caulobacter crescentus), this protein is Anthranilate phosphoribosyltransferase.